The primary structure comprises 372 residues: N-methyl-L-tryptophan oxidase (372 aa).

4-34 (DLIIIGSGSVGAAAGYYATRAGLNVLMTDAH) contacts FAD. At C308 the chain carries S-8alpha-FAD cysteine.

This sequence belongs to the MSOX/MTOX family. MTOX subfamily. As to quaternary structure, monomer. FAD is required as a cofactor.

The catalysed reaction is N(alpha)-methyl-L-tryptophan + O2 + H2O = L-tryptophan + formaldehyde + H2O2. Its function is as follows. Catalyzes the oxidative demethylation of N-methyl-L-tryptophan. The sequence is that of N-methyl-L-tryptophan oxidase from Escherichia coli O127:H6 (strain E2348/69 / EPEC).